The chain runs to 456 residues: Bifunctional protein GlmU (456 aa).

The segment at 1 to 228 (MPQNTLNIVI…SHLAAGVNNK (228 aa)) is pyrophosphorylase. UDP-N-acetyl-alpha-D-glucosamine contacts are provided by residues 11–14 (LAAG), lysine 25, glutamine 75, 80–81 (GT), 102–104 (YGD), glycine 138, glutamate 153, asparagine 168, and asparagine 226. Residue aspartate 104 coordinates Mg(2+). Asparagine 226 is a binding site for Mg(2+). Residues 229–249 (LQLAELERIFQTGQAQELLKA) form a linker region. Residues 250 to 456 (GVTLHDPARF…GWVRPEKDKQ (207 aa)) form an N-acetyltransferase region. UDP-N-acetyl-alpha-D-glucosamine is bound by residues arginine 332 and lysine 350. The active-site Proton acceptor is the histidine 362. Residues tyrosine 365 and asparagine 376 each contribute to the UDP-N-acetyl-alpha-D-glucosamine site. Acetyl-CoA is bound by residues alanine 379, 385–386 (NY), serine 404, alanine 422, and arginine 439.

This sequence in the N-terminal section; belongs to the N-acetylglucosamine-1-phosphate uridyltransferase family. In the C-terminal section; belongs to the transferase hexapeptide repeat family. As to quaternary structure, homotrimer. The cofactor is Mg(2+).

Its subcellular location is the cytoplasm. The catalysed reaction is alpha-D-glucosamine 1-phosphate + acetyl-CoA = N-acetyl-alpha-D-glucosamine 1-phosphate + CoA + H(+). It carries out the reaction N-acetyl-alpha-D-glucosamine 1-phosphate + UTP + H(+) = UDP-N-acetyl-alpha-D-glucosamine + diphosphate. It participates in nucleotide-sugar biosynthesis; UDP-N-acetyl-alpha-D-glucosamine biosynthesis; N-acetyl-alpha-D-glucosamine 1-phosphate from alpha-D-glucosamine 6-phosphate (route II): step 2/2. It functions in the pathway nucleotide-sugar biosynthesis; UDP-N-acetyl-alpha-D-glucosamine biosynthesis; UDP-N-acetyl-alpha-D-glucosamine from N-acetyl-alpha-D-glucosamine 1-phosphate: step 1/1. Its pathway is bacterial outer membrane biogenesis; LPS lipid A biosynthesis. In terms of biological role, catalyzes the last two sequential reactions in the de novo biosynthetic pathway for UDP-N-acetylglucosamine (UDP-GlcNAc). The C-terminal domain catalyzes the transfer of acetyl group from acetyl coenzyme A to glucosamine-1-phosphate (GlcN-1-P) to produce N-acetylglucosamine-1-phosphate (GlcNAc-1-P), which is converted into UDP-GlcNAc by the transfer of uridine 5-monophosphate (from uridine 5-triphosphate), a reaction catalyzed by the N-terminal domain. This chain is Bifunctional protein GlmU, found in Neisseria meningitidis serogroup C (strain 053442).